The following is a 795-amino-acid chain: Lon protease 1 (795 aa).

In terms of domain architecture, Lon N-terminal spans 9–204 (LPVLPLRNTV…RVLALLLRDL (196 aa)). 360–367 (GPPGVGKT) contributes to the ATP binding site. In terms of domain architecture, Lon proteolytic spans 596–777 (EPQVGAAQGL…GEVLKLLLLP (182 aa)). Catalysis depends on residues Ser-683 and Lys-726.

Belongs to the peptidase S16 family. In terms of assembly, homohexamer. Organized in a ring with a central cavity.

Its subcellular location is the cytoplasm. It catalyses the reaction Hydrolysis of proteins in presence of ATP.. In terms of biological role, ATP-dependent serine protease that mediates the selective degradation of mutant and abnormal proteins as well as certain short-lived regulatory proteins. Required for cellular homeostasis and for survival from DNA damage and developmental changes induced by stress. Degrades polypeptides processively to yield small peptide fragments that are 5 to 10 amino acids long. Binds to DNA in a double-stranded, site-specific manner. The polypeptide is Lon protease 1 (Thermus thermophilus (strain ATCC BAA-163 / DSM 7039 / HB27)).